The following is a 185-amino-acid chain: ATP-dependent protease subunit HslV (185 aa).

The active site involves T13. Na(+) is bound by residues G167, C170, and T173.

It belongs to the peptidase T1B family. HslV subfamily. As to quaternary structure, a double ring-shaped homohexamer of HslV is capped on each side by a ring-shaped HslU homohexamer. The assembly of the HslU/HslV complex is dependent on binding of ATP.

The protein resides in the cytoplasm. The catalysed reaction is ATP-dependent cleavage of peptide bonds with broad specificity.. Allosterically activated by HslU binding. In terms of biological role, protease subunit of a proteasome-like degradation complex believed to be a general protein degrading machinery. The protein is ATP-dependent protease subunit HslV of Sinorhizobium fredii (strain NBRC 101917 / NGR234).